The sequence spans 374 residues: tRNA-specific 2-thiouridylase MnmA (374 aa).

ATP is bound by residues 15–22 and M41; that span reads GMSGGVDS. The interval 101–103 is interaction with target base in tRNA; the sequence is NPD. Residue C106 is the Nucleophile of the active site. C106 and C203 are disulfide-bonded. G130 serves as a coordination point for ATP. An interaction with tRNA region spans residues 153–155; it reads KDQ. The active-site Cysteine persulfide intermediate is C203. The interval 311 to 312 is interaction with tRNA; the sequence is RY.

The protein belongs to the MnmA/TRMU family.

The protein resides in the cytoplasm. It catalyses the reaction S-sulfanyl-L-cysteinyl-[protein] + uridine(34) in tRNA + AH2 + ATP = 2-thiouridine(34) in tRNA + L-cysteinyl-[protein] + A + AMP + diphosphate + H(+). Its function is as follows. Catalyzes the 2-thiolation of uridine at the wobble position (U34) of tRNA, leading to the formation of s(2)U34. This chain is tRNA-specific 2-thiouridylase MnmA, found in Lysinibacillus sphaericus (strain C3-41).